A 291-amino-acid chain; its full sequence is Pyridoxal 5'-phosphate synthase subunit PdxS (291 aa).

Aspartate 23 lines the D-ribose 5-phosphate pocket. The Schiff-base intermediate with D-ribose 5-phosphate role is filled by lysine 80. Position 152 (glycine 152) interacts with D-ribose 5-phosphate. Arginine 164 serves as a coordination point for D-glyceraldehyde 3-phosphate. Residues glycine 213 and 234–235 (GS) contribute to the D-ribose 5-phosphate site.

Belongs to the PdxS/SNZ family. As to quaternary structure, in the presence of PdxT, forms a dodecamer of heterodimers.

The catalysed reaction is aldehydo-D-ribose 5-phosphate + D-glyceraldehyde 3-phosphate + L-glutamine = pyridoxal 5'-phosphate + L-glutamate + phosphate + 3 H2O + H(+). It functions in the pathway cofactor biosynthesis; pyridoxal 5'-phosphate biosynthesis. Functionally, catalyzes the formation of pyridoxal 5'-phosphate from ribose 5-phosphate (RBP), glyceraldehyde 3-phosphate (G3P) and ammonia. The ammonia is provided by the PdxT subunit. Can also use ribulose 5-phosphate and dihydroxyacetone phosphate as substrates, resulting from enzyme-catalyzed isomerization of RBP and G3P, respectively. This is Pyridoxal 5'-phosphate synthase subunit PdxS from Haemophilus influenzae (strain PittGG).